We begin with the raw amino-acid sequence, 445 residues long: 3-phosphoshikimate 1-carboxyvinyltransferase (445 aa).

3-phosphoshikimate-binding residues include Lys-28, Ser-29, and Arg-33. Phosphoenolpyruvate is bound at residue Lys-28. Residues Gly-102 and Arg-130 each contribute to the phosphoenolpyruvate site. 5 residues coordinate 3-phosphoshikimate: Ser-179, Ser-180, Gln-181, Glu-330, and His-357. Gln-181 contacts phosphoenolpyruvate. The Proton acceptor role is filled by Glu-330. The phosphoenolpyruvate site is built by Arg-361, Arg-405, and Lys-430.

The protein belongs to the EPSP synthase family. As to quaternary structure, monomer.

The protein localises to the cytoplasm. The catalysed reaction is 3-phosphoshikimate + phosphoenolpyruvate = 5-O-(1-carboxyvinyl)-3-phosphoshikimate + phosphate. It functions in the pathway metabolic intermediate biosynthesis; chorismate biosynthesis; chorismate from D-erythrose 4-phosphate and phosphoenolpyruvate: step 6/7. Catalyzes the transfer of the enolpyruvyl moiety of phosphoenolpyruvate (PEP) to the 5-hydroxyl of shikimate-3-phosphate (S3P) to produce enolpyruvyl shikimate-3-phosphate and inorganic phosphate. The sequence is that of 3-phosphoshikimate 1-carboxyvinyltransferase from Bifidobacterium longum (strain DJO10A).